The following is a 213-amino-acid chain: 2,3-bisphosphoglycerate-dependent phosphoglycerate mutase (213 aa).

Substrate contacts are provided by residues 8 to 15, 21 to 22, R58, 84 to 87, K95, 111 to 112, and 155 to 156; these read RHGQSEWN, TG, ERNY, RR, and GN. H9 serves as the catalytic Tele-phosphohistidine intermediate. The active-site Proton donor/acceptor is the E84.

Belongs to the phosphoglycerate mutase family. BPG-dependent PGAM subfamily.

The catalysed reaction is (2R)-2-phosphoglycerate = (2R)-3-phosphoglycerate. The protein operates within carbohydrate degradation; glycolysis; pyruvate from D-glyceraldehyde 3-phosphate: step 3/5. Catalyzes the interconversion of 2-phosphoglycerate and 3-phosphoglycerate. The chain is 2,3-bisphosphoglycerate-dependent phosphoglycerate mutase from Cytophaga hutchinsonii (strain ATCC 33406 / DSM 1761 / CIP 103989 / NBRC 15051 / NCIMB 9469 / D465).